Consider the following 213-residue polypeptide: MSSDVLVTTPAQRQTEPHAEAVSRNRRQQATFRKVLAAAMATLREKSYADLTVRLVAARAKVAPATAYTYFSSKNHLIAEVYLDLVRQVPCVTDVNVPMPIRVTSSLRHLALVVADEPEIGAACTAALLDGGADPAVRAVRDRIGAEIHRRITSAIGPGADPGTVFALEMAFFGALVQAGSGTFTYHEIADRLGYVVGLILAGANEPSTGGSE.

The segment covering 1–14 (MSSDVLVTTPAQRQ) has biased composition (polar residues). Residues 1-26 (MSSDVLVTTPAQRQTEPHAEAVSRNR) form a disordered region. The HTH tetR-type domain occupies 29–89 (QATFRKVLAA…EVYLDLVRQV (61 aa)).

This is an uncharacterized protein from Mycobacterium tuberculosis (strain CDC 1551 / Oshkosh).